A 325-amino-acid polypeptide reads, in one-letter code: 5-dehydro-2-deoxygluconokinase (325 aa).

This sequence belongs to the carbohydrate kinase PfkB family.

The enzyme catalyses 5-dehydro-2-deoxy-D-gluconate + ATP = 6-phospho-5-dehydro-2-deoxy-D-gluconate + ADP + H(+). It functions in the pathway polyol metabolism; myo-inositol degradation into acetyl-CoA; acetyl-CoA from myo-inositol: step 5/7. Functionally, catalyzes the phosphorylation of 5-dehydro-2-deoxy-D-gluconate (2-deoxy-5-keto-D-gluconate or DKG) to 6-phospho-5-dehydro-2-deoxy-D-gluconate (DKGP). The sequence is that of 5-dehydro-2-deoxygluconokinase from Listeria innocua serovar 6a (strain ATCC BAA-680 / CLIP 11262).